We begin with the raw amino-acid sequence, 175 residues long: RNA pyrophosphohydrolase (175 aa).

In terms of domain architecture, Nudix hydrolase spans 7 to 150; it reads GYRLNVGIIL…KRQVYIQALK (144 aa). A Nudix box motif is present at residues 39-60; that stretch reads GGLAPGETAMQAMYRELHEEVG.

It belongs to the Nudix hydrolase family. RppH subfamily. The cofactor is a divalent metal cation.

Functionally, accelerates the degradation of transcripts by removing pyrophosphate from the 5'-end of triphosphorylated RNA, leading to a more labile monophosphorylated state that can stimulate subsequent ribonuclease cleavage. The protein is RNA pyrophosphohydrolase of Legionella pneumophila (strain Paris).